A 698-amino-acid polypeptide reads, in one-letter code: Glycine--tRNA ligase beta subunit (698 aa).

This sequence belongs to the class-II aminoacyl-tRNA synthetase family. In terms of assembly, tetramer of two alpha and two beta subunits.

The protein resides in the cytoplasm. The enzyme catalyses tRNA(Gly) + glycine + ATP = glycyl-tRNA(Gly) + AMP + diphosphate. This Xanthomonas campestris pv. campestris (strain 8004) protein is Glycine--tRNA ligase beta subunit.